A 134-amino-acid chain; its full sequence is Protein Turandot E (134 aa).

Residues 1-38 (MSYTRTIHSSASILKMNSALQISCLLVVLGCLLGSGHC) form the signal peptide.

It belongs to the Turandot family.

The protein resides in the secreted. In terms of biological role, a humoral factor that may play a role in stress tolerance. The protein is Protein Turandot E of Drosophila sechellia (Fruit fly).